Consider the following 306-residue polypeptide: 4-hydroxy-tetrahydrodipicolinate synthase (306 aa).

Thr-49 provides a ligand contact to pyruvate. The Proton donor/acceptor role is filled by Tyr-136. Catalysis depends on Lys-164, which acts as the Schiff-base intermediate with substrate. Ile-207 contacts pyruvate.

It belongs to the DapA family. Homotetramer; dimer of dimers.

Its subcellular location is the cytoplasm. The catalysed reaction is L-aspartate 4-semialdehyde + pyruvate = (2S,4S)-4-hydroxy-2,3,4,5-tetrahydrodipicolinate + H2O + H(+). Its pathway is amino-acid biosynthesis; L-lysine biosynthesis via DAP pathway; (S)-tetrahydrodipicolinate from L-aspartate: step 3/4. Its function is as follows. Catalyzes the condensation of (S)-aspartate-beta-semialdehyde [(S)-ASA] and pyruvate to 4-hydroxy-tetrahydrodipicolinate (HTPA). This is 4-hydroxy-tetrahydrodipicolinate synthase from Haloarcula marismortui (strain ATCC 43049 / DSM 3752 / JCM 8966 / VKM B-1809) (Halobacterium marismortui).